A 407-amino-acid polypeptide reads, in one-letter code: Imidazolonepropionase (407 aa).

Positions 74 and 76 each coordinate Fe(3+). Residues His-74 and His-76 each coordinate Zn(2+). 4-imidazolone-5-propanoate contacts are provided by Arg-83, Tyr-146, and His-179. Residue Tyr-146 participates in N-formimidoyl-L-glutamate binding. Position 244 (His-244) interacts with Fe(3+). A Zn(2+)-binding site is contributed by His-244. Gln-247 is a binding site for 4-imidazolone-5-propanoate. Fe(3+) is bound at residue Asp-319. Residue Asp-319 coordinates Zn(2+). Residues Asn-321 and Gly-323 each contribute to the N-formimidoyl-L-glutamate site. 4-imidazolone-5-propanoate is bound at residue Thr-324.

This sequence belongs to the metallo-dependent hydrolases superfamily. HutI family. It depends on Zn(2+) as a cofactor. The cofactor is Fe(3+).

Its subcellular location is the cytoplasm. It catalyses the reaction 4-imidazolone-5-propanoate + H2O = N-formimidoyl-L-glutamate. It functions in the pathway amino-acid degradation; L-histidine degradation into L-glutamate; N-formimidoyl-L-glutamate from L-histidine: step 3/3. Catalyzes the hydrolytic cleavage of the carbon-nitrogen bond in imidazolone-5-propanoate to yield N-formimidoyl-L-glutamate. It is the third step in the universal histidine degradation pathway. This is Imidazolonepropionase from Salmonella agona (strain SL483).